Here is a 151-residue protein sequence, read N- to C-terminus: Deoxyuridine 5'-triphosphate nucleotidohydrolase (151 aa).

Substrate-binding positions include Arg70 to Gly72, Asn83, Leu87 to Asp89, and Met97.

It belongs to the dUTPase family. It depends on Mg(2+) as a cofactor.

The enzyme catalyses dUTP + H2O = dUMP + diphosphate + H(+). It participates in pyrimidine metabolism; dUMP biosynthesis; dUMP from dCTP (dUTP route): step 2/2. Its function is as follows. This enzyme is involved in nucleotide metabolism: it produces dUMP, the immediate precursor of thymidine nucleotides and it decreases the intracellular concentration of dUTP so that uracil cannot be incorporated into DNA. This Yersinia enterocolitica serotype O:8 / biotype 1B (strain NCTC 13174 / 8081) protein is Deoxyuridine 5'-triphosphate nucleotidohydrolase.